A 274-amino-acid polypeptide reads, in one-letter code: UPF0173 metal-dependent hydrolase A2cp1_1196 (274 aa).

Belongs to the UPF0173 family.

The sequence is that of UPF0173 metal-dependent hydrolase A2cp1_1196 from Anaeromyxobacter dehalogenans (strain 2CP-1 / ATCC BAA-258).